A 120-amino-acid chain; its full sequence is MNAPDRFELFVLPDGAKKVTMVRDTKIPNASMFTILKEDHTIGNLIRMQLIADQDIIFAGYRMPHPLEHNVNIRIQTNNNTNPLECVQKSMECLSREFTSLENSFIEQVQKKRNVADQYI.

Belongs to the archaeal Rpo11/eukaryotic RPB11/RPC19 RNA polymerase subunit family. As to quaternary structure, component of the RNA polymerase II (Pol II) complex consisting of 12 subunits.

It is found in the nucleus. DNA-dependent RNA polymerase catalyzes the transcription of DNA into RNA using the four ribonucleoside triphosphates as substrates. Component of RNA polymerase II which synthesizes mRNA precursors and many functional non-coding RNAs. Pol II is the central component of the basal RNA polymerase II transcription machinery. It is composed of mobile elements that move relative to each other. RPB11 is part of the core element with the central large cleft. This chain is DNA-directed RNA polymerase II subunit rpb11 (polr2j), found in Dictyostelium discoideum (Social amoeba).